Consider the following 178-residue polypeptide: Endothelin-2 (178 aa).

Residues 1–24 form the signal peptide; that stretch reads MVSVPTAWCSVALALLVALHEGKD. A propeptide spanning residues 25–46 is cleaved from the precursor; that stretch reads QAAATLEQPASSPRARAAHLRL. 2 cysteine pairs are disulfide-bonded: C49-C63 and C51-C59. Positions 70–178 are excised as a propeptide; that stretch reads VNTPGQTAPY…RTTHSRHRKR (109 aa). The endothelin-like stretch occupies residues 96 to 111; that stretch reads CECSSARDPACATFCH. The disordered stretch occupies residues 154–178; that stretch reads KTHFAKRQQEATREPRTTHSRHRKR. Positions 160–170 are enriched in basic and acidic residues; that stretch reads RQQEATREPRT.

Belongs to the endothelin/sarafotoxin family.

It localises to the secreted. In terms of biological role, endothelins are endothelium-derived vasoconstrictor peptides. The protein is Endothelin-2 (EDN2) of Oryctolagus cuniculus (Rabbit).